The following is a 270-amino-acid chain: uncharacterized protein (270 aa).

The first 22 residues, 1-22 (MEYIKKIALYMSVLLLIIFIGG), serve as a signal peptide directing secretion. A lipid anchor (N-palmitoyl cysteine) is attached at Cys23. Cys23 is lipidated: S-diacylglycerol cysteine.

It belongs to the staphylococcal tandem lipoprotein family.

It localises to the cell membrane. This is an uncharacterized protein from Staphylococcus aureus (strain USA300).